We begin with the raw amino-acid sequence, 452 residues long: MGRRKIEIEPIKDDRNRTVTFIKRKAGLFKKAHELSVLCQVDIAVIILGSNNTFYEYSSVDMSNLLNVHQNNTDLPHNIIEPSDYGDYVKKPRVVLNERKRRRRRATVLQPASHSGSCTVSSQDSSSVQNNGNLSAPLASNDAGNAGVSTPLVHCHGAISRSGSNHSDCARNSADYQMLQGGLNSGGSFHANDYKESVDQQHVANEAIHRNFMNKRIRPDTHLLLSESNHSNYHNFYPSPYENLPKPSLPASLVGNIPSFQSQFVQVIPANSNPMGKGFNGTGDSESFEAKQKIHPTVAISNTLEGPAPVQAMVHHLHQLNSNRGKLSGKPYLKLNIPKATNDACQRSPAMYSGTASPKTDVQATPNQMLASNMSSPLSRSKFLGFKNNDMDDLYHNGRCGSTYVNNKTFFLKPPIGRPPKFPKSPSSSIVVFPSSVASSTLKSTSSTNSPD.

The 55-residue stretch at 3 to 57 (RRKIEIEPIKDDRNRTVTFIKRKAGLFKKAHELSVLCQVDIAVIILGSNNTFYEY) folds into the MADS-box domain. A DNA-binding region (mef2-type) is located at residues 58–87 (SSVDMSNLLNVHQNNTDLPHNIIEPSDYGD). Residues 97-142 (NERKRRRRRATVLQPASHSGSCTVSSQDSSSVQNNGNLSAPLASND) form a disordered region. Over residues 115–127 (SGSCTVSSQDSSS) the composition is skewed to low complexity.

It belongs to the MEF2 family. In terms of assembly, can heterodimerize with RLM1. Interacts with HOG1. Phosphorylated by HOG1.

The protein localises to the nucleus. Functionally, transcription factor that controls part of the HOG1-mediated osmostress responses. Binds to the DNA sequence 5'-ACTACTA[TA](4)TAG-3'. Does not appear to function in the MPK1 pathway. The polypeptide is Transcription factor SMP1 (SMP1) (Saccharomyces cerevisiae (strain ATCC 204508 / S288c) (Baker's yeast)).